A 345-amino-acid chain; its full sequence is RDS/peripherin-like protein xRDS36 (345 aa).

Topologically, residues 1–24 are cytoplasmic; that stretch reads MVLFKAKFSFQRRVKLAQTLWLLS. A helical membrane pass occupies residues 25 to 43; sequence WLSVLVGCLTFGMGIFLKV. Topologically, residues 44–61 are lumenal; that stretch reads QLWIHNEVMDNTTAHAVP. N-linked (GlcNAc...) asparagine glycosylation is present at N54. Residues 62–80 traverse the membrane as a helical segment; the sequence is NTVITAGLVGILLGYFAGK. The Cytoplasmic portion of the chain corresponds to 81–99; the sequence is ISQASMDLTKYQRWKSFMM. The chain crosses the membrane as a helical span at residues 100-123; that stretch reads PFFFLAILSCIVCLAALVLSVALR. Topologically, residues 124 to 264 are lumenal; the sequence is GTLEESLKIG…LGYYTGIMAT (141 aa). An N-linked (GlcNAc...) asparagine glycan is attached at N229. A helical membrane pass occupies residues 265–290; that stretch reads NGAAVTLSFLLQASVLVSLRYVQTSM. The Cytoplasmic segment spans residues 291 to 345; it reads DKIRDPDDVEADTEGFLLEKGVMETVNSSLEKIKDLFKSNQVETAEGGGEGAAGS.

This sequence belongs to the PRPH2/ROM1 family. In terms of assembly, homodimer; disulfide-linked. Rod specific.

The protein localises to the membrane. The sequence is that of RDS/peripherin-like protein xRDS36 (rds36) from Xenopus laevis (African clawed frog).